A 549-amino-acid polypeptide reads, in one-letter code: Arginine--tRNA ligase (549 aa).

The 'HIGH' region signature appears at 132–142 (ANPTGPLHIGH).

It belongs to the class-I aminoacyl-tRNA synthetase family. In terms of assembly, monomer.

Its subcellular location is the cytoplasm. The catalysed reaction is tRNA(Arg) + L-arginine + ATP = L-arginyl-tRNA(Arg) + AMP + diphosphate. In Paenarthrobacter aurescens (strain TC1), this protein is Arginine--tRNA ligase.